The following is a 181-amino-acid chain: Transcription termination/antitermination protein NusG (181 aa).

The KOW domain maps to 130-161 (PGEMVRVNDGPFADFNGVVEEVDYEKSRLKVS).

The protein belongs to the NusG family. In terms of assembly, monomer. Interacts with the transcription termination factor Rho and with RNA polymerase.

In terms of biological role, participates in transcription elongation, termination and antitermination. In the absence of Rho, increases the rate of transcription elongation by the RNA polymerase (RNAP), probably by partially suppressing pausing. In the presence of Rho, modulates most Rho-dependent termination events by interacting with the RNAP to render the complex more susceptible to the termination activity of Rho. May be required to overcome a kinetic limitation of Rho to function at certain terminators. Also involved in ribosomal RNA transcriptional antitermination. The sequence is that of Transcription termination/antitermination protein NusG from Salmonella typhi.